Consider the following 367-residue polypeptide: Aminomethyltransferase (367 aa).

The protein belongs to the GcvT family. In terms of assembly, the glycine cleavage system is composed of four proteins: P, T, L and H.

The enzyme catalyses N(6)-[(R)-S(8)-aminomethyldihydrolipoyl]-L-lysyl-[protein] + (6S)-5,6,7,8-tetrahydrofolate = N(6)-[(R)-dihydrolipoyl]-L-lysyl-[protein] + (6R)-5,10-methylene-5,6,7,8-tetrahydrofolate + NH4(+). In terms of biological role, the glycine cleavage system catalyzes the degradation of glycine. This Saccharopolyspora erythraea (strain ATCC 11635 / DSM 40517 / JCM 4748 / NBRC 13426 / NCIMB 8594 / NRRL 2338) protein is Aminomethyltransferase.